Reading from the N-terminus, the 181-residue chain is Probable inactive acireductone dioxygenase 2 (181 aa).

Belongs to the acireductone dioxygenase (ARD) family.

The protein localises to the cytoplasm. Its subcellular location is the nucleus. Probable inactive acireductone dioxygenase. The sequence is that of Probable inactive acireductone dioxygenase 2 from Sorghum bicolor (Sorghum).